The sequence spans 274 residues: NH(3)-dependent NAD(+) synthetase (274 aa).

Residue 46-53 (GISGGQDS) participates in ATP binding. Aspartate 52 is a binding site for Mg(2+). Arginine 140 serves as a coordination point for deamido-NAD(+). Position 160 (threonine 160) interacts with ATP. Glutamate 165 contributes to the Mg(2+) binding site. 2 residues coordinate deamido-NAD(+): lysine 173 and aspartate 180. ATP is bound by residues lysine 189 and threonine 211. 260–261 (HK) is a binding site for deamido-NAD(+).

Belongs to the NAD synthetase family. As to quaternary structure, homodimer.

It catalyses the reaction deamido-NAD(+) + NH4(+) + ATP = AMP + diphosphate + NAD(+) + H(+). It functions in the pathway cofactor biosynthesis; NAD(+) biosynthesis; NAD(+) from deamido-NAD(+) (ammonia route): step 1/1. In terms of biological role, catalyzes the ATP-dependent amidation of deamido-NAD to form NAD. Uses ammonia as a nitrogen source. The protein is NH(3)-dependent NAD(+) synthetase of Streptococcus equi subsp. zooepidemicus (strain H70).